Here is a 346-residue protein sequence, read N- to C-terminus: Oxidoreductase calI (346 aa).

A disordered region spans residues 11-33; that stretch reads VSTPQGRGDGRPTADQVLRDQDP. The span at 18-32 shows a compositional bias: basic and acidic residues; it reads GDGRPTADQVLRDQD. Leu52, Lys76, Asp100, and Asn128 together coordinate NADP(+). Ser181 serves as the catalytic Proton donor. 3 residues coordinate NADP(+): Tyr208, Lys212, and Ile241. Tyr208 functions as the Proton acceptor in the catalytic mechanism. Catalysis depends on Lys212, which acts as the Lowers pKa of active site Tyr.

This sequence belongs to the short-chain dehydrogenases/reductases (SDR) family.

The protein operates within secondary metabolite biosynthesis. Oxidoreductase; part of the gene cluster that mediates the biosynthesis of calbistrin A and related compounds. Calbistrin A is a secondary metabolite with an interesting structure that was recently found to have bioactivity against leukemia cells. It consists of two polyketides linked by an ester bond: a bicyclic decalin containing polyketide and a linear 12 carbon dioic acid structure. The polyketide synthase calA is probably responsible for forming the decalin moiety. Because calA lacks a designated enoylreductase (ER) domain, the required activity is provided by the trans-enoyl reductase calK. Following release from the PKS, calF then probably catalyzes the oxidation and the subsequent Diels Alder cycloisomerization that lead to the formation of the decalin moiety. The decalin polyketide backbone includes two C-methyl groups, at C7 and C11 in backbone, of which the C7 position is probably methylated by the methyltransferase domain of calA. A candidate for adding the methyl group at C11, if not done by CalA, is the cluster methyltransferase calH. Several additional tailoring enzymes within the cluster could be involved in the modification of the decalin polyketide product. Those include the 3 cytochrome P450 monooxygenases CalE, CalG and CalL, of which one might be responsible for the introduction of the extra hydroxyl group attached to the backbone of the decalin moiety, at position C9 in the backbone, that allows for attachment of the linear moiety. One tailoring enzyme activity that is expected to be involved in biosynthesis of calbistrin is an acyltransferase for connecting the two polyketide synthase products, and which could be performed by the cluster acyltransferase calJ. The enzyme responsible for the biosynthesis of the linear moiety, probably a second PKS, has not been identified yet. In Penicillium decumbens, this protein is Oxidoreductase calI.